Consider the following 272-residue polypeptide: Elongation factor Ts (272 aa).

The interval threonine 76–valine 79 is involved in Mg(2+) ion dislocation from EF-Tu.

It belongs to the EF-Ts family.

The protein resides in the cytoplasm. Functionally, associates with the EF-Tu.GDP complex and induces the exchange of GDP to GTP. It remains bound to the aminoacyl-tRNA.EF-Tu.GTP complex up to the GTP hydrolysis stage on the ribosome. The polypeptide is Elongation factor Ts (Corynebacterium urealyticum (strain ATCC 43042 / DSM 7109)).